Here is a 754-residue protein sequence, read N- to C-terminus: Polyadenylate-binding protein, cytoplasmic and nuclear (754 aa).

Polar residues predominate over residues 1–25; the sequence is MSAEVSTTPAADNVNGTPEATNAAA. The interval 1 to 52 is disordered; that stretch reads MSAEVSTTPAADNVNGTPEATNAAATSAPEVTAVESSSPTSPNNNNQPHSAS. Residues 36–46 show a composition bias toward low complexity; it reads SSSPTSPNNNN. 4 consecutive RRM domains span residues 51-129, 139-216, 232-309, and 335-465; these read ASLY…WSQR, GNVF…HHIS, TNIY…RAQK, and VNLY…LAQR. Disordered stretches follow at residues 365-420 and 595-648; these read KVMR…KKSD and RGGG…EEAP. The span at 366–420 shows a compositional bias: basic and acidic residues; the sequence is VMRDSTPAERTETPDSEKEKEVNKENEKKEDEEKAAEEKPKESDEEKKDETKKSD. Over residues 610 to 633 the composition is skewed to gly residues; sequence GMRGPGYQGRGGPQGGPRPQGGRG. Low complexity predominate over residues 634–648; the sequence is QNAAAQPAAGREEAP. The 78-residue stretch at 649-726 folds into the PABC domain; sequence AGALTAQALN…ALSVYDEYMK (78 aa). The interval 729–754 is disordered; it reads GEGEAPADADKPKEAAKETATEENKS.

The protein belongs to the polyadenylate-binding protein type-1 family.

The protein localises to the cytoplasm. Its subcellular location is the nucleus. In terms of biological role, binds the poly(A) tail of mRNA. Appears to be an important mediator of the multiple roles of the poly(A) tail in mRNA biogenesis, stability and translation. In the nucleus, involved in both mRNA cleavage and polyadenylation. Is also required for efficient mRNA export to the cytoplasm. Acts in concert with a poly(A)-specific nuclease (PAN) to affect poly(A) tail shortening, which may occur concomitantly with either nucleocytoplasmic mRNA transport or translational initiation. In the cytoplasm, stimulates translation initiation and regulates mRNA decay through translation termination-coupled poly(A) shortening, probably mediated by PAN. The protein is Polyadenylate-binding protein, cytoplasmic and nuclear (pab1) of Aspergillus clavatus (strain ATCC 1007 / CBS 513.65 / DSM 816 / NCTC 3887 / NRRL 1 / QM 1276 / 107).